Consider the following 914-residue polypeptide: Trafficking kinesin-binding protein 2 (914 aa).

Positions Met-1–Ser-21 are enriched in polar residues. The interval Met-1–Thr-30 is disordered. The HAP1 N-terminal domain occupies Glu-48–Arg-353. Residues Gln-134–Ser-354 are a coiled coil. An interaction with HGS region spans residues His-359–Arg-509. The residue at position 420 (Ser-420) is a Phosphoserine. Disordered stretches follow at residues Gln-447–Leu-482 and Gln-765–Pro-787. The span at Leu-454–Met-471 shows a compositional bias: polar residues. The span at Ser-775 to Pro-787 shows a compositional bias: pro residues.

It belongs to the milton family. As to quaternary structure, interacts with GABA-A receptor and O-GlcNAc transferase. Interacts with HGS. Interacts with RHOT1/Miro-1 and RHOT2/Miro-2. O-glycosylated. In terms of tissue distribution, widely expressed, with highest expression in heart.

It localises to the cytoplasm. The protein resides in the early endosome. The protein localises to the mitochondrion. Its function is as follows. May regulate endosome-to-lysosome trafficking of membrane cargo, including EGFR. The sequence is that of Trafficking kinesin-binding protein 2 (TRAK2) from Homo sapiens (Human).